The chain runs to 879 residues: Valine--tRNA ligase (879 aa).

The 'HIGH' region motif lies at Pro45–His55. The 'KMSKS' region signature appears at Lys521–Ser525. Lys524 provides a ligand contact to ATP. Residues Leu806–Lys879 are a coiled coil.

This sequence belongs to the class-I aminoacyl-tRNA synthetase family. ValS type 1 subfamily. In terms of assembly, monomer.

It localises to the cytoplasm. The catalysed reaction is tRNA(Val) + L-valine + ATP = L-valyl-tRNA(Val) + AMP + diphosphate. In terms of biological role, catalyzes the attachment of valine to tRNA(Val). As ValRS can inadvertently accommodate and process structurally similar amino acids such as threonine, to avoid such errors, it has a 'posttransfer' editing activity that hydrolyzes mischarged Thr-tRNA(Val) in a tRNA-dependent manner. In Lactobacillus johnsonii (strain CNCM I-12250 / La1 / NCC 533), this protein is Valine--tRNA ligase.